We begin with the raw amino-acid sequence, 435 residues long: 3-ketoacyl-CoA thiolase (435 aa).

The active-site Acyl-thioester intermediate is C98. Catalysis depends on proton acceptor residues H391 and C421.

This sequence belongs to the thiolase-like superfamily. Thiolase family. Heterotetramer of two alpha chains (FadJ) and two beta chains (FadI).

It is found in the cytoplasm. The catalysed reaction is an acyl-CoA + acetyl-CoA = a 3-oxoacyl-CoA + CoA. It functions in the pathway lipid metabolism; fatty acid beta-oxidation. Catalyzes the final step of fatty acid oxidation in which acetyl-CoA is released and the CoA ester of a fatty acid two carbons shorter is formed. The protein is 3-ketoacyl-CoA thiolase of Vibrio parahaemolyticus serotype O3:K6 (strain RIMD 2210633).